The following is a 165-amino-acid chain: Sporulation-specific cell division protein SsgB (165 aa).

The tract at residues 1–21 (MLVGNSWTRSLEPVSGHEHTE) is disordered.

Belongs to the SsgA family. In terms of assembly, interacts with SsgA. Interacts with FtsZ (via N-terminus).

It is found in the cell septum. Functionally, involved in sporulation-specific cell division. Required for early stages of sporulation. Important in the process of growth cessation prior to sporulation-specific cell division. Recruits cell division protein FtsZ to the future septum sites and tethers the contractile ring structure (Z ring) to the cytoplasmic membrane during sporulation. Stimulates polymerization and filament length of FtsZ in vitro. The sequence is that of Sporulation-specific cell division protein SsgB from Kineococcus radiotolerans (strain ATCC BAA-149 / DSM 14245 / SRS30216).